Here is a 43-residue protein sequence, read N- to C-terminus: Methionine aminopeptidase (43 aa).

Belongs to the peptidase M24A family. Methionine aminopeptidase type 1 subfamily. As to quaternary structure, monomer. The cofactor is Co(2+). Zn(2+) serves as cofactor. It depends on Mn(2+) as a cofactor. Requires Fe(2+) as cofactor.

It catalyses the reaction Release of N-terminal amino acids, preferentially methionine, from peptides and arylamides.. Its function is as follows. Removes the N-terminal methionine from nascent proteins. The N-terminal methionine is often cleaved when the second residue in the primary sequence is small and uncharged (Met-Ala-, Cys, Gly, Pro, Ser, Thr, or Val). Requires deformylation of the N(alpha)-formylated initiator methionine before it can be hydrolyzed. In Klebsiella oxytoca, this protein is Methionine aminopeptidase (map).